Consider the following 512-residue polypeptide: ADP,ATP carrier protein 4 (512 aa).

11 consecutive transmembrane segments (helical) span residues isoleucine 34–isoleucine 54, isoleucine 71–valine 91, isoleucine 102–phenylalanine 122, phenylalanine 157–tryptophan 177, phenylalanine 192–glutamate 212, phenylalanine 231–isoleucine 251, leucine 296–lysine 316, alanine 330–leucine 350, phenylalanine 361–valine 381, leucine 390–isoleucine 410, and serine 476–threonine 496.

This sequence belongs to the ADP/ATP translocase tlc family.

It is found in the cell membrane. Functionally, provides the rickettsial cell with host ATP in exchange for rickettsial ADP. This is an obligate exchange system. This energy acquiring activity is an important component of rickettsial parasitism. The sequence is that of ADP,ATP carrier protein 4 (tlcD) from Rickettsia prowazekii (strain Madrid E).